A 496-amino-acid polypeptide reads, in one-letter code: Probable CtpA-like serine protease (496 aa).

Positions 1 to 16 (MDDKQHTTSSDDERAE) are enriched in basic and acidic residues. Residues 1 to 27 (MDDKQHTTSSDDERAENATSNQDQQTN) form a disordered region. Residues 17–27 (NATSNQDQQTN) show a composition bias toward polar residues. The chain crosses the membrane as a helical span at residues 39 to 59 (FISILIGTIIITAVITVVAYI). A PDZ domain is found at 124 to 206 (TKSFNEGVSG…TEVTLTVQRG (83 aa)). Residues S329, D340, and K354 each act as charge relay system in the active site.

This sequence belongs to the peptidase S41A family.

It localises to the cell membrane. The protein is Probable CtpA-like serine protease of Staphylococcus aureus (strain MRSA252).